The chain runs to 344 residues: L-rhamnose-proton symporter (344 aa).

A run of 10 helical transmembrane segments spans residues 4-24, 38-58, 68-88, 101-121, 137-157, 175-195, 214-234, 259-279, 290-310, and 321-341; these read AITM…CFYA, WSVG…ALLL, FNLS…IGNI, MGIG…TPII, TLLG…AGQL, LLLA…MNAA, LPSY…FCFI, ILLS…YAWG, MSWM…GLVL, and VAVL…VGLG.

Belongs to the L-rhamnose transporter (TC 2.A.7.6) family.

It localises to the cell inner membrane. It catalyses the reaction L-rhamnopyranose(in) + H(+)(in) = L-rhamnopyranose(out) + H(+)(out). Uptake of L-rhamnose across the cytoplasmic membrane with the concomitant transport of protons into the cell (symport system). The protein is L-rhamnose-proton symporter of Salmonella paratyphi A (strain ATCC 9150 / SARB42).